The following is an 812-amino-acid chain: E3 UFM1-protein ligase 1 homolog (812 aa).

Positions 389-495 (IKHSAGQGKP…KTKEDNTNIF (107 aa)) are disordered. 2 stretches are compositionally biased toward basic and acidic residues: residues 403-415 (SEHR…KDLG) and 475-491 (DAKH…KEDN).

It belongs to the UFL1 family.

E3 UFM1-protein ligase that mediates ufmylation of target proteins. The protein is E3 UFM1-protein ligase 1 homolog of Oryza sativa subsp. indica (Rice).